A 238-amino-acid polypeptide reads, in one-letter code: tRNA (guanine-N(7)-)-methyltransferase (238 aa).

Polar residues predominate over residues 1–12 (MTDTAENQTPND). A disordered region spans residues 1–20 (MTDTAENQTPNDRQAGHPRS). Residues Glu-70, Asp-95, Asp-122, and Asp-145 each contribute to the S-adenosyl-L-methionine site. Residue Asp-145 is part of the active site. Substrate contacts are provided by residues Lys-149, Asp-181, and 216 to 219 (TKFE).

This sequence belongs to the class I-like SAM-binding methyltransferase superfamily. TrmB family.

The catalysed reaction is guanosine(46) in tRNA + S-adenosyl-L-methionine = N(7)-methylguanosine(46) in tRNA + S-adenosyl-L-homocysteine. The protein operates within tRNA modification; N(7)-methylguanine-tRNA biosynthesis. Its function is as follows. Catalyzes the formation of N(7)-methylguanine at position 46 (m7G46) in tRNA. This Neisseria meningitidis serogroup C (strain 053442) protein is tRNA (guanine-N(7)-)-methyltransferase.